A 142-amino-acid chain; its full sequence is MAKKVSAYIKLQVKAGSANPSPPVGPALGQHGVNIMEFCKAFNARTEKLEKGAPTPVVITVYSDRSFTFETKTPPASFLLKKAAGITSGSSKPNKDKVGKVTHAQLLEIAKTKEPDMTGSDLEAKARCIAGSARSMGLVVEG.

Belongs to the universal ribosomal protein uL11 family. Part of the ribosomal stalk of the 50S ribosomal subunit. Interacts with L10 and the large rRNA to form the base of the stalk. L10 forms an elongated spine to which L12 dimers bind in a sequential fashion forming a multimeric L10(L12)X complex. In terms of processing, one or more lysine residues are methylated.

In terms of biological role, forms part of the ribosomal stalk which helps the ribosome interact with GTP-bound translation factors. The protein is Large ribosomal subunit protein uL11 of Tolumonas auensis (strain DSM 9187 / NBRC 110442 / TA 4).